We begin with the raw amino-acid sequence, 515 residues long: 1-pyrroline-5-carboxylate dehydrogenase (515 aa).

Active-site residues include glutamate 286 and cysteine 320.

The protein belongs to the aldehyde dehydrogenase family. RocA subfamily.

The catalysed reaction is L-glutamate 5-semialdehyde + NAD(+) + H2O = L-glutamate + NADH + 2 H(+). It functions in the pathway amino-acid degradation; L-proline degradation into L-glutamate; L-glutamate from L-proline: step 2/2. The polypeptide is 1-pyrroline-5-carboxylate dehydrogenase (Bacillus cereus (strain B4264)).